The primary structure comprises 396 residues: NADH-quinone oxidoreductase subunit D (396 aa).

This sequence belongs to the complex I 49 kDa subunit family. In terms of assembly, NDH-1 is composed of 14 different subunits. Subunits NuoB, C, D, E, F, and G constitute the peripheral sector of the complex.

The protein localises to the cell inner membrane. It carries out the reaction a quinone + NADH + 5 H(+)(in) = a quinol + NAD(+) + 4 H(+)(out). Functionally, NDH-1 shuttles electrons from NADH, via FMN and iron-sulfur (Fe-S) centers, to quinones in the respiratory chain. The immediate electron acceptor for the enzyme in this species is believed to be ubiquinone. Couples the redox reaction to proton translocation (for every two electrons transferred, four hydrogen ions are translocated across the cytoplasmic membrane), and thus conserves the redox energy in a proton gradient. The chain is NADH-quinone oxidoreductase subunit D from Rhizobium johnstonii (strain DSM 114642 / LMG 32736 / 3841) (Rhizobium leguminosarum bv. viciae).